We begin with the raw amino-acid sequence, 213 residues long: Protein DMP4 (213 aa).

4 helical membrane passes run 51–71 (LANL…PIFS), 78–98 (LVSK…CFIL), 142–162 (FIDF…VLFD), and 180–200 (VLTA…ATFP).

Belongs to the plant DMP1 protein family. In terms of tissue distribution, expressed in leaves, flowers and siliques, especially in vascular tissues.

The protein resides in the vacuole membrane. Functionally, involved in membrane remodeling. This is Protein DMP4 from Arabidopsis thaliana (Mouse-ear cress).